The primary structure comprises 326 residues: Putative ribose-phosphate pyrophosphokinase 2 (326 aa).

Residues 43–45 (DGE) and 102–103 (RQ) contribute to the ATP site. His-136 is a binding site for Mg(2+). D-ribose 5-phosphate is bound by residues Asp-225 and 229 to 233 (NTGKT).

Belongs to the ribose-phosphate pyrophosphokinase family. Class I subfamily. Homohexamer. Requires Mg(2+) as cofactor.

The protein resides in the cytoplasm. The enzyme catalyses D-ribose 5-phosphate + ATP = 5-phospho-alpha-D-ribose 1-diphosphate + AMP + H(+). It participates in metabolic intermediate biosynthesis; 5-phospho-alpha-D-ribose 1-diphosphate biosynthesis; 5-phospho-alpha-D-ribose 1-diphosphate from D-ribose 5-phosphate (route I): step 1/1. Involved in the biosynthesis of the central metabolite phospho-alpha-D-ribosyl-1-pyrophosphate (PRPP) via the transfer of pyrophosphoryl group from ATP to 1-hydroxyl of ribose-5-phosphate (Rib-5-P). The chain is Putative ribose-phosphate pyrophosphokinase 2 from Streptococcus pyogenes serotype M3 (strain SSI-1).